Here is a 99-residue protein sequence, read N- to C-terminus: U8-agatoxin-Ao1a (99 aa).

An N-terminal signal peptide occupies residues 1 to 19; sequence MKSLLFVTIAVYFVAQAVT. Residues 20–45 constitute a propeptide that is removed on maturation; that stretch reads ANLLSNFLGSSLIDDDKGNMHKLYKR.

It belongs to the neurotoxin 02 (plectoxin) family. Contains 5 disulfide bonds. In terms of tissue distribution, expressed by the venom gland.

Its subcellular location is the secreted. The sequence is that of U8-agatoxin-Ao1a from Agelena orientalis (Funnel-web spider).